We begin with the raw amino-acid sequence, 247 residues long: Phosphoribosylaminoimidazole-succinocarboxamide synthase (247 aa).

It belongs to the SAICAR synthetase family.

It catalyses the reaction 5-amino-1-(5-phospho-D-ribosyl)imidazole-4-carboxylate + L-aspartate + ATP = (2S)-2-[5-amino-1-(5-phospho-beta-D-ribosyl)imidazole-4-carboxamido]succinate + ADP + phosphate + 2 H(+). Its pathway is purine metabolism; IMP biosynthesis via de novo pathway; 5-amino-1-(5-phospho-D-ribosyl)imidazole-4-carboxamide from 5-amino-1-(5-phospho-D-ribosyl)imidazole-4-carboxylate: step 1/2. The protein is Phosphoribosylaminoimidazole-succinocarboxamide synthase of Gloeobacter violaceus (strain ATCC 29082 / PCC 7421).